The sequence spans 263 residues: MVRRLLALSRPLYWLYEKRLLREVKRGPMPRHLGLILDGNRRYARALGLSPTKGHEFGVQKAYEVLEWCLEMGIKTVTVWVFSTDNFKRPPEEVETLMNLFLREAERMAEDHRILEHQVRVRFIGRREGFSPEVVRAIERLERRTEGHRGMFLNIAMGYGGREEIVDAVKRLLLEAEARGLSPKEVAEGLTPEDIARHLYTAGLPDPDFIIRTSGEIRLSGFLLWQSAYSEFYFADVLWPEFRKIDFLRALRSYQARERRFGR.

Asp38 is a catalytic residue. Asp38 lines the Mg(2+) pocket. Residues 39 to 42 (GNRR), His55, and 83 to 85 (STD) each bind substrate. The active-site Proton acceptor is Asn86. Substrate is bound by residues Phe87, Arg89, Arg212, and 218–220 (RLS). Mg(2+) is bound at residue Glu231.

Belongs to the UPP synthase family. In terms of assembly, homodimer. Mg(2+) serves as cofactor.

Catalyzes the condensation of isopentenyl diphosphate (IPP) with allylic pyrophosphates generating different type of terpenoids. In Thermus thermophilus (strain ATCC 27634 / DSM 579 / HB8), this protein is Isoprenyl transferase.